A 400-amino-acid polypeptide reads, in one-letter code: Phosphoglycerate kinase (400 aa).

Residues 24–26 (DFN), R39, 62–65 (HLGK), R123, and R156 each bind substrate. Residues K207, G298, E329, and 356–359 (GGDS) each bind ATP.

Belongs to the phosphoglycerate kinase family. In terms of assembly, monomer.

The protein localises to the cytoplasm. The catalysed reaction is (2R)-3-phosphoglycerate + ATP = (2R)-3-phospho-glyceroyl phosphate + ADP. It participates in carbohydrate degradation; glycolysis; pyruvate from D-glyceraldehyde 3-phosphate: step 2/5. This chain is Phosphoglycerate kinase, found in Clostridioides difficile (strain 630) (Peptoclostridium difficile).